The sequence spans 265 residues: Glutamate racemase (265 aa).

Residues 9–10 (DS) and 41–42 (YG) contribute to the substrate site. The Proton donor/acceptor role is filled by cysteine 72. A substrate-binding site is contributed by 73–74 (NT). Cysteine 183 (proton donor/acceptor) is an active-site residue. 184-185 (TH) contributes to the substrate binding site.

This sequence belongs to the aspartate/glutamate racemases family.

The enzyme catalyses L-glutamate = D-glutamate. It functions in the pathway cell wall biogenesis; peptidoglycan biosynthesis. Functionally, provides the (R)-glutamate required for cell wall biosynthesis. This chain is Glutamate racemase, found in Lysinibacillus sphaericus (strain C3-41).